Here is a 549-residue protein sequence, read N- to C-terminus: Glucose-6-phosphate isomerase (549 aa).

Glu355 serves as the catalytic Proton donor. Residues His386 and Lys514 contribute to the active site.

It belongs to the GPI family.

The protein resides in the cytoplasm. It catalyses the reaction alpha-D-glucose 6-phosphate = beta-D-fructose 6-phosphate. Its pathway is carbohydrate biosynthesis; gluconeogenesis. It participates in carbohydrate degradation; glycolysis; D-glyceraldehyde 3-phosphate and glycerone phosphate from D-glucose: step 2/4. Catalyzes the reversible isomerization of glucose-6-phosphate to fructose-6-phosphate. This Enterobacter sp. (strain 638) protein is Glucose-6-phosphate isomerase.